Here is a 177-residue protein sequence, read N- to C-terminus: Nucleoside-triphosphatase THEP1 (177 aa).

ATP is bound by residues 10 to 17 (GKPGIGKT) and 101 to 108 (CLVIDEIG).

This sequence belongs to the THEP1 NTPase family.

It carries out the reaction a ribonucleoside 5'-triphosphate + H2O = a ribonucleoside 5'-diphosphate + phosphate + H(+). Its function is as follows. Has nucleotide phosphatase activity towards ATP, GTP, CTP, TTP and UTP. May hydrolyze nucleoside diphosphates with lower efficiency. This Natranaerobius thermophilus (strain ATCC BAA-1301 / DSM 18059 / JW/NM-WN-LF) protein is Nucleoside-triphosphatase THEP1.